Reading from the N-terminus, the 394-residue chain is Cell division protein FtsZ (394 aa).

Residues 21 to 25, 108 to 110, Glu139, Arg143, and Asp187 each bind GTP; these read GGGNN and GTG. Positions 317–394 are disordered; it reads DKPSSQGRKA…EERRSRRTRR (78 aa). 2 stretches are compositionally biased toward low complexity: residues 328–346 and 353–364; these read STGF…SGAS and SAHTSHSQSSES. The span at 365-388 shows a compositional bias: basic and acidic residues; it reads VNERSHTTKDDDIPSFIRNREERR.

This sequence belongs to the FtsZ family. As to quaternary structure, homodimer. Polymerizes to form a dynamic ring structure in a strictly GTP-dependent manner. Interacts directly with several other division proteins.

Its subcellular location is the cytoplasm. Essential cell division protein that forms a contractile ring structure (Z ring) at the future cell division site. The regulation of the ring assembly controls the timing and the location of cell division. One of the functions of the FtsZ ring is to recruit other cell division proteins to the septum to produce a new cell wall between the dividing cells. Binds GTP and shows GTPase activity. This is Cell division protein FtsZ from Staphylococcus epidermidis (strain ATCC 12228 / FDA PCI 1200).